The primary structure comprises 283 residues: Protein/nucleic acid deglycase HchA (283 aa).

Zn(2+) is bound by residues His86, Glu91, and His123. Catalysis depends on Cys185, which acts as the Nucleophile.

This sequence belongs to the peptidase C56 family. HchA subfamily. As to quaternary structure, homodimer.

The protein resides in the cytoplasm. The catalysed reaction is N(omega)-(1-hydroxy-2-oxopropyl)-L-arginyl-[protein] + H2O = lactate + L-arginyl-[protein] + H(+). The enzyme catalyses N(6)-(1-hydroxy-2-oxopropyl)-L-lysyl-[protein] + H2O = lactate + L-lysyl-[protein] + H(+). It carries out the reaction S-(1-hydroxy-2-oxopropyl)-L-cysteinyl-[protein] + H2O = lactate + L-cysteinyl-[protein] + H(+). It catalyses the reaction N(omega)-(1-hydroxy-2-oxoethyl)-L-arginyl-[protein] + H2O = L-arginyl-[protein] + glycolate + H(+). The catalysed reaction is N(6)-(1-hydroxy-2-oxoethyl)-L-lysyl-[protein] + H2O = glycolate + L-lysyl-[protein] + H(+). The enzyme catalyses S-(1-hydroxy-2-oxoethyl)-L-cysteinyl-[protein] + H2O = glycolate + L-cysteinyl-[protein] + H(+). It carries out the reaction N(2)-(1-hydroxy-2-oxopropyl)-dGTP + H2O = lactate + dGTP + H(+). It catalyses the reaction N(2)-(1-hydroxy-2-oxopropyl)-GTP + H2O = lactate + GTP + H(+). The catalysed reaction is N(2)-(1-hydroxy-2-oxopropyl)-GDP + H2O = lactate + GDP + H(+). The enzyme catalyses N(2)-(1-hydroxy-2-oxopropyl)-GMP + H2O = lactate + GMP + H(+). It carries out the reaction N(2)-(1-hydroxy-2-oxoethyl)-dGTP + H2O = dGTP + glycolate + H(+). It catalyses the reaction N(2)-(1-hydroxy-2-oxoethyl)-GTP + H2O = glycolate + GTP + H(+). The catalysed reaction is N(2)-(1-hydroxy-2-oxoethyl)-GDP + H2O = glycolate + GDP + H(+). The enzyme catalyses N(2)-(1-hydroxy-2-oxoethyl)-GMP + H2O = glycolate + GMP + H(+). It carries out the reaction an N(2)-(1-hydroxy-2-oxopropyl)-guanosine in RNA + H2O = a guanosine in RNA + lactate + H(+). It catalyses the reaction an N(2)-(1-hydroxy-2-oxopropyl)-2'-deoxyguanosine in DNA + H2O = a 2'-deoxyguanosine in DNA + lactate + H(+). The catalysed reaction is an N(2)-(1-hydroxy-2-oxoethyl)-guanosine in RNA + H2O = a guanosine in RNA + glycolate + H(+). The enzyme catalyses an N(2)-(1-hydroxy-2-oxoethyl)-2'-deoxyguanosine in DNA + H2O = a 2'-deoxyguanosine in DNA + glycolate + H(+). Protein and nucleotide deglycase that catalyzes the deglycation of the Maillard adducts formed between amino groups of proteins or nucleotides and reactive carbonyl groups of glyoxals. Thus, functions as a protein deglycase that repairs methylglyoxal- and glyoxal-glycated proteins, and releases repaired proteins and lactate or glycolate, respectively. Deglycates cysteine, arginine and lysine residues in proteins, and thus reactivates these proteins by reversing glycation by glyoxals. Acts on early glycation intermediates (hemithioacetals and aminocarbinols), preventing the formation of Schiff bases and advanced glycation endproducts (AGE). Also functions as a nucleotide deglycase able to repair glycated guanine in the free nucleotide pool (GTP, GDP, GMP, dGTP) and in DNA and RNA. Is thus involved in a major nucleotide repair system named guanine glycation repair (GG repair), dedicated to reversing methylglyoxal and glyoxal damage via nucleotide sanitization and direct nucleic acid repair. Plays an important role in protecting cells from carbonyl stress. The sequence is that of Protein/nucleic acid deglycase HchA from Escherichia coli (strain K12 / MC4100 / BW2952).